A 289-amino-acid chain; its full sequence is MYG1 protein CT_386 (289 aa).

The protein belongs to the MYG1 family.

The sequence is that of MYG1 protein CT_386 from Chlamydia trachomatis serovar D (strain ATCC VR-885 / DSM 19411 / UW-3/Cx).